Here is a 344-residue protein sequence, read N- to C-terminus: S-adenosylmethionine:tRNA ribosyltransferase-isomerase (344 aa).

Belongs to the QueA family. In terms of assembly, monomer.

It is found in the cytoplasm. The enzyme catalyses 7-aminomethyl-7-carbaguanosine(34) in tRNA + S-adenosyl-L-methionine = epoxyqueuosine(34) in tRNA + adenine + L-methionine + 2 H(+). The protein operates within tRNA modification; tRNA-queuosine biosynthesis. Its function is as follows. Transfers and isomerizes the ribose moiety from AdoMet to the 7-aminomethyl group of 7-deazaguanine (preQ1-tRNA) to give epoxyqueuosine (oQ-tRNA). The polypeptide is S-adenosylmethionine:tRNA ribosyltransferase-isomerase (Thiobacillus denitrificans (strain ATCC 25259 / T1)).